Here is a 910-residue protein sequence, read N- to C-terminus: Putative coatomer subunit beta'-3 (910 aa).

WD repeat units follow at residues 13-52 (QRSE…MVKS), 55-94 (VTEL…KVKV), 97-136 (AHTD…MCTQ), 140-180 (GHSH…PNFT), 183-224 (GHSK…CVQT), 227-266 (GHAH…LENT), 269-309 (YGLE…ASMD), 351-393 (TCDL…GSAL), and 461-501 (RIDV…SHLD). Acidic residues predominate over residues 865-884 (ENGVEESQEDAVEVDVEADG). The disordered stretch occupies residues 865-910 (ENGVEESQEDAVEVDVEADGSTDGTVLVNGNDTEEQWGTNNEESLA). A compositionally biased stretch (polar residues) spans 886 to 910 (TDGTVLVNGNDTEEQWGTNNEESLA).

The protein belongs to the WD repeat COPB2 family. In terms of assembly, oligomeric complex that consists of at least the alpha, beta, beta', gamma, delta, epsilon and zeta subunits.

It localises to the cytoplasm. It is found in the golgi apparatus membrane. The protein resides in the cytoplasmic vesicle. Its subcellular location is the COPI-coated vesicle membrane. The coatomer is a cytosolic protein complex that binds to dilysine motifs and reversibly associates with Golgi non-clathrin-coated vesicles, which further mediate biosynthetic protein transport from the ER, via the Golgi up to the trans Golgi network. Coatomer complex is required for budding from Golgi membranes, and is essential for the retrograde Golgi-to-ER transport of dilysine-tagged proteins. The chain is Putative coatomer subunit beta'-3 from Oryza sativa subsp. japonica (Rice).